The following is a 383-amino-acid chain: Lipid-A-disaccharide synthase (383 aa).

It belongs to the LpxB family.

It catalyses the reaction a lipid X + a UDP-2-N,3-O-bis[(3R)-3-hydroxyacyl]-alpha-D-glucosamine = a lipid A disaccharide + UDP + H(+). It participates in bacterial outer membrane biogenesis; LPS lipid A biosynthesis. Condensation of UDP-2,3-diacylglucosamine and 2,3-diacylglucosamine-1-phosphate to form lipid A disaccharide, a precursor of lipid A, a phosphorylated glycolipid that anchors the lipopolysaccharide to the outer membrane of the cell. This Anaeromyxobacter dehalogenans (strain 2CP-C) protein is Lipid-A-disaccharide synthase.